Reading from the N-terminus, the 369-residue chain is Anhydro-N-acetylmuramic acid kinase (369 aa).

An ATP-binding site is contributed by 9 to 16 (GTSLDAVD).

It belongs to the anhydro-N-acetylmuramic acid kinase family.

It carries out the reaction 1,6-anhydro-N-acetyl-beta-muramate + ATP + H2O = N-acetyl-D-muramate 6-phosphate + ADP + H(+). It functions in the pathway amino-sugar metabolism; 1,6-anhydro-N-acetylmuramate degradation. The protein operates within cell wall biogenesis; peptidoglycan recycling. Functionally, catalyzes the specific phosphorylation of 1,6-anhydro-N-acetylmuramic acid (anhMurNAc) with the simultaneous cleavage of the 1,6-anhydro ring, generating MurNAc-6-P. Is required for the utilization of anhMurNAc either imported from the medium or derived from its own cell wall murein, and thus plays a role in cell wall recycling. The polypeptide is Anhydro-N-acetylmuramic acid kinase (Phenylobacterium zucineum (strain HLK1)).